Reading from the N-terminus, the 296-residue chain is Glycine--tRNA ligase alpha subunit (296 aa).

Belongs to the class-II aminoacyl-tRNA synthetase family. Tetramer of two alpha and two beta subunits.

The protein localises to the cytoplasm. It carries out the reaction tRNA(Gly) + glycine + ATP = glycyl-tRNA(Gly) + AMP + diphosphate. The chain is Glycine--tRNA ligase alpha subunit from Maricaulis maris (strain MCS10) (Caulobacter maris).